Reading from the N-terminus, the 84-residue chain is Large ribosomal subunit protein bL27 (84 aa).

This sequence belongs to the bacterial ribosomal protein bL27 family.

The protein is Large ribosomal subunit protein bL27 of Campylobacter jejuni subsp. jejuni serotype O:6 (strain 81116 / NCTC 11828).